We begin with the raw amino-acid sequence, 95 residues long: Gas vesicle protein S (95 aa).

It belongs to the gas vesicle GvpA family.

The protein localises to the gas vesicle. Its function is as follows. Probably a minor component of the gas vesicle. It is not clear what function gas vesicles perform in soil bacteria. When a minimal gvp locus (gvpA2-gvpR-gvpN-gvpF-gvpG-gvpL-gvpS-gvpK-gvpJ-gvpT-gvpU, called pNL29) is expressed in E.coli gas vesicles are made. This Priestia megaterium (Bacillus megaterium) protein is Gas vesicle protein S.